A 153-amino-acid chain; its full sequence is Small ribosomal subunit protein uS9 (153 aa).

Low complexity predominate over residues Met1 to Asp19. 2 disordered regions span residues Met1–Val23 and Leu121–Arg153. A compositionally biased stretch (basic and acidic residues) spans Arg129–Lys138. Positions Tyr139 to Arg153 are enriched in basic residues.

This sequence belongs to the universal ribosomal protein uS9 family.

The sequence is that of Small ribosomal subunit protein uS9 from Saccharopolyspora erythraea (strain ATCC 11635 / DSM 40517 / JCM 4748 / NBRC 13426 / NCIMB 8594 / NRRL 2338).